A 694-amino-acid chain; its full sequence is DNA-binding protein RFX2 (694 aa).

A DNA-binding region (RFX-type winged-helix) is located at residues 174-249 (HLQWLLDNYE…YHYYGIRLKP (76 aa)). 2 disordered regions span residues 268–309 (QPIH…SQHH) and 659–694 (DDVSELGSDNDGDPRISGQPPVKRERVDLNHSMQEM). Residues 288–299 (NTANSSQHTSPE) show a composition bias toward polar residues. Positions 300-309 (QSVAAQSQHH) are enriched in low complexity.

It belongs to the RFX family. In terms of assembly, homodimer. Heterodimer; heterodimerizes with other rfx proteins.

The protein localises to the nucleus. Its subcellular location is the cytoplasm. Functionally, transcription factor that acts as a key regulator of ciliogenesis. Specifically regulates expression of genes required for cilium assembly and function. Recognizes and binds the X-box, a regulatory motif with DNA sequence 5'-GTNRCC(0-3N)RGYAAC-3' present on promoters. Required for neural tube closure and neural ciliogenesis. This Xenopus tropicalis (Western clawed frog) protein is DNA-binding protein RFX2 (rfx2).